The primary structure comprises 198 residues: Thymidine kinase (198 aa).

Residues S9–S16 and D87–Q90 each bind ATP. E88 (proton acceptor) is an active-site residue. Zn(2+)-binding residues include C145, C147, C182, and H185.

The protein belongs to the thymidine kinase family. In terms of assembly, homotetramer.

It is found in the cytoplasm. It carries out the reaction thymidine + ATP = dTMP + ADP + H(+). This Ruegeria pomeroyi (strain ATCC 700808 / DSM 15171 / DSS-3) (Silicibacter pomeroyi) protein is Thymidine kinase.